The primary structure comprises 874 residues: Leucine--tRNA ligase (874 aa).

Residues 47–57 carry the 'HIGH' region motif; sequence PYPSGKLHMGH. A 'KMSKS' region motif is present at residues 636–640; the sequence is KMSKS. Residue K639 coordinates ATP.

This sequence belongs to the class-I aminoacyl-tRNA synthetase family.

It localises to the cytoplasm. The catalysed reaction is tRNA(Leu) + L-leucine + ATP = L-leucyl-tRNA(Leu) + AMP + diphosphate. This chain is Leucine--tRNA ligase, found in Acinetobacter baumannii (strain AB0057).